The following is a 367-amino-acid chain: Phosphoribosylaminoimidazole-succinocarboxamide synthase (367 aa).

Belongs to the SAICAR synthetase family.

It catalyses the reaction 5-amino-1-(5-phospho-D-ribosyl)imidazole-4-carboxylate + L-aspartate + ATP = (2S)-2-[5-amino-1-(5-phospho-beta-D-ribosyl)imidazole-4-carboxamido]succinate + ADP + phosphate + 2 H(+). The protein operates within purine metabolism; IMP biosynthesis via de novo pathway; 5-amino-1-(5-phospho-D-ribosyl)imidazole-4-carboxamide from 5-amino-1-(5-phospho-D-ribosyl)imidazole-4-carboxylate: step 1/2. The protein is Phosphoribosylaminoimidazole-succinocarboxamide synthase of Shewanella oneidensis (strain ATCC 700550 / JCM 31522 / CIP 106686 / LMG 19005 / NCIMB 14063 / MR-1).